A 25-amino-acid chain; its full sequence is Oxyopinin-3c (25 aa).

Expressed by the venom gland.

It is found in the secreted. Functionally, may have cytolytic and antimicrobial activity. This Oxyopes takobius (Lynx spider) protein is Oxyopinin-3c.